The chain runs to 554 residues: Glutamine--tRNA ligase (554 aa).

Residues 34-44 (PEPNGYLHIGH) carry the 'HIGH' region motif. ATP is bound by residues 35 to 37 (EPN) and 41 to 47 (HIGHAKS). Residues Asp-67 and Tyr-212 each coordinate L-glutamine. ATP contacts are provided by residues Thr-231, 261-262 (RL), and 269-271 (MSK). The 'KMSKS' region signature appears at 268 to 272 (VMSKR). Residues 317–324 (TKQDNTIE) are interaction with tRNA.

Belongs to the class-I aminoacyl-tRNA synthetase family. Monomer.

The protein localises to the cytoplasm. It carries out the reaction tRNA(Gln) + L-glutamine + ATP = L-glutaminyl-tRNA(Gln) + AMP + diphosphate. The polypeptide is Glutamine--tRNA ligase (Shigella flexneri serotype 5b (strain 8401)).